Here is a 1487-residue protein sequence, read N- to C-terminus: Adhesion G protein-coupled receptor L2 (1487 aa).

The signal sequence occupies residues 1–25 (MVSSGCRMRSLWFIIIISFSPSTEG). At 26–855 (FSRAALPFGL…VHHLLLTVIT (830 aa)) the chain is on the extracellular side. The region spanning 41–130 (SCEGYSIDLR…KYLEVQYECV (90 aa)) is the SUEL-type lectin domain. Residue Asn-99 is glycosylated (N-linked (GlcNAc...) asparagine). The region spanning 139 to 398 (VCPGTLKAIV…ILRYSLEFGP (260 aa)) is the Olfactomedin-like domain. Residues 423 to 439 (STTSSASQRGPVSSTAA) show a composition bias toward polar residues. The interval 423–461 (STTSSASQRGPVSSTAAGPQDGSRGTKPPPAVSTTKIPP) is disordered. 2 N-linked (GlcNAc...) asparagine glycosylation sites follow: Asn-524 and Asn-735. Residues 663 to 841 (TRVSMPTENI…AILMAHREIA (179 aa)) enclose the GAIN-B domain. Cystine bridges form between Cys-792–Cys-823 and Cys-811–Cys-825. A GPS region spans residues 792-841 (CSFWNYSERTMMGYWSTQGCKLVDTNKTRTTCACSHLTNFAILMAHREIA). Residues 829–841 (TNFAILMAHREIA) form a stachel region. Residues 856–876 (WVGIVVSLVCLAICIFTFCFF) form a helical membrane-spanning segment. Topologically, residues 877 to 884 (RGLQSDRN) are cytoplasmic. Residues 885–905 (TIHKNLCINLFIAEFIFLIGI) traverse the membrane as a helical segment. At 906 to 911 (DKTKYT) the chain is on the extracellular side. Residues 912-932 (IACPVFAGLLHFFFLAAFSWM) traverse the membrane as a helical segment. Residues 933-955 (CLEGVQLYLMLVEVFESEYSRKK) lie on the Cytoplasmic side of the membrane. The chain crosses the membrane as a helical span at residues 956–976 (YYYVAGYLFPATVVGVSAAID). At 977–994 (YKSYGTVQACWLHVDNYF) the chain is on the extracellular side. A helical membrane pass occupies residues 995-1015 (IWSFIGPVTFIILLNIIFLVI). The Cytoplasmic portion of the chain corresponds to 1016 to 1064 (TLCKMVKHSNTLKPDSSRLENINNYRVCDGYYNTDLPGYEDNKPFIKSW). The chain crosses the membrane as a helical span at residues 1065–1085 (VLGAFALLCLLGLTWSFGLLF). The Extracellular segment spans residues 1086–1090 (VNEET). A helical membrane pass occupies residues 1091–1111 (VVMAYLFTAFNAFQGLFIFIF). Positions 1386–1430 (EADDHLQSPNRDSLYTSMPNLRDSPYPESSPDMAEDLSPSRRSEN) are disordered. Residues 1392–1404 (QSPNRDSLYTSMP) show a composition bias toward polar residues. Residues Ser-1402, Ser-1437, and Ser-1458 each carry the phosphoserine modification.

Belongs to the G-protein coupled receptor 2 family. Adhesion G-protein coupled receptor (ADGR) subfamily. Heterodimer of 2 chains generated by proteolytic processing; the large extracellular N-terminal fragment and the membrane-bound C-terminal fragment predominantly remain associated and non-covalently linked. In terms of processing, autoproteolytically processed at the GPS region of the GAIN-B domain; this cleavage modulates receptor activity. In terms of tissue distribution, ubiquitously expressed. In neurons, specifically localizes to dendritic domains of CA1 pyramidal neurons in the S. lacunosummoleculare.

The protein resides in the postsynaptic cell membrane. Its activity is regulated as follows. Forms a heterodimer of 2 chains generated by proteolytic processing that remain associated through non-covalent interactions mediated by the GAIN-B domain. In the inactivated receptor, the Stachel sequence (also named stalk) is embedded in the GAIN-B domain, where it adopts a beta-strand conformation. On activation, the Stachel moves into the 7 transmembrane region and adopts a twisted hook-shaped configuration that forms contacts within the receptor, leading to coupling of a G-alpha protein, which activates signaling. The cleaved GAIN-B and N-terminal domains can then dissociate from the rest of the receptor. Functionally, orphan adhesion G-protein coupled receptor (aGPCR), which mediates synapse specificity. Ligand binding causes a conformation change that triggers signaling via guanine nucleotide-binding proteins (G proteins) and modulates the activity of downstream effectors. Following G-protein coupled receptor activation, associates with cell adhesion molecules that are expressed at the surface of adjacent cells to direct synapse specificity. Specifically mediates the establishment of perforant-path synapses on CA1-region pyramidal neurons in the hippocampus. Localizes to postsynaptic spines in excitatory synapses in the S.lacunosum-moleculare and interacts with presynaptic cell adhesion molecules, such as teneurins, promoting synapse formation. The chain is Adhesion G protein-coupled receptor L2 from Mus musculus (Mouse).